A 205-amino-acid chain; its full sequence is Isochorismatase domain-containing protein 2 (205 aa).

The protein belongs to the isochorismatase family.

The protein is Isochorismatase domain-containing protein 2 (isoc2) of Xenopus laevis (African clawed frog).